Here is a 447-residue protein sequence, read N- to C-terminus: uncharacterized protein (447 aa).

A run of 2 helical transmembrane segments spans residues 380–400 and 412–432; these read VLEI…LLLT and ILGF…GVYV.

Its subcellular location is the cell membrane. This is an uncharacterized protein from Methanocaldococcus jannaschii (strain ATCC 43067 / DSM 2661 / JAL-1 / JCM 10045 / NBRC 100440) (Methanococcus jannaschii).